The primary structure comprises 329 residues: Putative glucose ABC transporter permease protein TsgC13 (329 aa).

A run of 7 helical transmembrane segments spans residues 3 to 23, 32 to 52, 60 to 80, 89 to 109, 139 to 161, 193 to 213, and 216 to 236; these read FAAGLLNATVQAATVLLLAGL, GVLNLGVEGMMLVGALGGFVV, WLGFGVGIACGMALAAVHAFL, VISGVMLTLLGTGLTTFFGSG, AFFRSTATDYLALLAVPVVWFFL, LAVIIGGGFAGAAGAHLSLAF, and LWVPGMTVGRGWIAVALVVFA.

The protein belongs to the binding-protein-dependent transport system permease family. As to quaternary structure, the complex is composed of two ATP-binding proteins (TsgD13), two transmembrane proteins (TsgB13 and TsgC13) and a solute-binding protein (TsgA13).

It is found in the cell membrane. Functionally, part of an ABC transporter complex involved in glucose import (Potential). Responsible for the translocation of the substrate across the membrane. This chain is Putative glucose ABC transporter permease protein TsgC13 (tsgC13), found in Haloferax volcanii (strain ATCC 29605 / DSM 3757 / JCM 8879 / NBRC 14742 / NCIMB 2012 / VKM B-1768 / DS2) (Halobacterium volcanii).